Here is a 945-residue protein sequence, read N- to C-terminus: Leucine--tRNA ligase (945 aa).

The 'HIGH' region signature appears at 66-77 (PYPSGTGLHVGH). Residues 716–720 (KMGKS) carry the 'KMSKS' region motif. Lys-719 is an ATP binding site.

Belongs to the class-I aminoacyl-tRNA synthetase family.

It is found in the cytoplasm. The catalysed reaction is tRNA(Leu) + L-leucine + ATP = L-leucyl-tRNA(Leu) + AMP + diphosphate. The chain is Leucine--tRNA ligase from Rhodococcus jostii (strain RHA1).